The sequence spans 241 residues: L-aspartate dehydrogenase (241 aa).

Residues alanine 109 and asparagine 164 each coordinate NAD(+). Histidine 193 is a catalytic residue.

The protein belongs to the L-aspartate dehydrogenase family.

It catalyses the reaction L-aspartate + NADP(+) + H2O = oxaloacetate + NH4(+) + NADPH + H(+). The catalysed reaction is L-aspartate + NAD(+) + H2O = oxaloacetate + NH4(+) + NADH + H(+). Its pathway is cofactor biosynthesis; NAD(+) biosynthesis; iminoaspartate from L-aspartate (dehydrogenase route): step 1/1. Functionally, specifically catalyzes the NAD or NADP-dependent dehydrogenation of L-aspartate to iminoaspartate. In Thermotoga sp. (strain RQ2), this protein is L-aspartate dehydrogenase.